Consider the following 94-residue polypeptide: Scorpine (94 aa).

The N-terminal stretch at methionine 1 to cysteine 19 is a signal peptide. One can recognise a BetaSPN-type CS-alpha/beta domain in the interval glutamate 55–tyrosine 94. Intrachain disulfides connect cysteine 58–cysteine 81, cysteine 68–cysteine 86, and cysteine 72–cysteine 88.

Belongs to the long chain scorpion toxin family. Class 3 subfamily. Expressed by the venom gland.

The protein resides in the secreted. It localises to the target cell membrane. Functionally, this full-length protein shows antibacterial activity against B.subtilis and K.pneumoniae. Also shows a potent inhibitory effect on the ookinete (ED(50) 0.7 uM) and gamete (ED(50) 10 uM) stages of Plasmodium berghei development. In addition, induces cell membrane disruption, leakage currents and cell death on HEK293 cell line (tested at 25 uM). This chain is Scorpine, found in Pandinus imperator (Emperor scorpion).